A 133-amino-acid chain; its full sequence is Small ribosomal subunit protein uS8 (133 aa).

Belongs to the universal ribosomal protein uS8 family. Part of the 30S ribosomal subunit. Contacts proteins S5 and S12.

Its function is as follows. One of the primary rRNA binding proteins, it binds directly to 16S rRNA central domain where it helps coordinate assembly of the platform of the 30S subunit. The chain is Small ribosomal subunit protein uS8 from Leptospira borgpetersenii serovar Hardjo-bovis (strain JB197).